An 893-amino-acid polypeptide reads, in one-letter code: Alpha-actinin-1 (893 aa).

Residues 1–248 are actin-binding; it reads MDHHYDPQQT…IMTYVSSFYH (248 aa). Tyrosine 13 carries the phosphotyrosine; by FAK1 modification. Calponin-homology (CH) domains are found at residues 32–136 and 145–251; these read KQQR…LRFA and TSAK…HAFS. 4 Spectrin repeats span residues 275 to 385, 395 to 500, 510 to 621, and 631 to 734; these read QLME…WLLN, HLAE…ALER, QLYL…ALME, and RLRK…EVEN. EF-hand domains are found at residues 747-782 and 788-823; these read EQMNEFRASFNHFDRDHSGTLGPEEFKACLISLGYD and QGEAEFARIMSIVDPNRMGVVTFQAFIDFMSRETAD. The Ca(2+) site is built by aspartate 760, aspartate 762, serine 764, threonine 766, and glutamate 771.

Belongs to the alpha-actinin family. Homodimer; antiparallel. Interacts with PDLIM4 (via PDZ domain).

It localises to the cytoplasm. It is found in the cytoskeleton. Its subcellular location is the myofibril. The protein localises to the sarcomere. The protein resides in the z line. It localises to the cell membrane. It is found in the cell junction. Its subcellular location is the cell projection. The protein localises to the ruffle. Its function is as follows. F-actin cross-linking protein is thought to anchor actin to a variety of intracellular structures. This is a bundling protein. The polypeptide is Alpha-actinin-1 (ACTN1) (Gallus gallus (Chicken)).